Reading from the N-terminus, the 24-residue chain is Brevinin-1Pe (24 aa).

Cysteine 18 and cysteine 24 are disulfide-bonded.

Expressed by the skin glands.

It is found in the secreted. Its function is as follows. Antibacterial activity against Gram-positive bacterium S.aureus and Gram-negative bacterium E.coli. Has activity against C.albicans. The chain is Brevinin-1Pe from Lithobates pipiens (Northern leopard frog).